Here is a 255-residue protein sequence, read N- to C-terminus: Hydroxyacylglutathione hydrolase (255 aa).

Residues histidine 56, histidine 58, aspartate 60, histidine 61, histidine 114, aspartate 133, and histidine 171 each contribute to the Zn(2+) site.

It belongs to the metallo-beta-lactamase superfamily. Glyoxalase II family. As to quaternary structure, monomer. Zn(2+) is required as a cofactor.

It catalyses the reaction an S-(2-hydroxyacyl)glutathione + H2O = a 2-hydroxy carboxylate + glutathione + H(+). Its pathway is secondary metabolite metabolism; methylglyoxal degradation; (R)-lactate from methylglyoxal: step 2/2. In terms of biological role, thiolesterase that catalyzes the hydrolysis of S-D-lactoyl-glutathione to form glutathione and D-lactic acid. This Nitrobacter winogradskyi (strain ATCC 25391 / DSM 10237 / CIP 104748 / NCIMB 11846 / Nb-255) protein is Hydroxyacylglutathione hydrolase.